Consider the following 45-residue polypeptide: Turripeptide OL11-like (45 aa).

3 disulfide bridges follow: Cys-1-Cys-31, Cys-5-Cys-24, and Cys-13-Cys-45. A Kazal-like domain is found at 1 to 45 (CMTICTMEYWPVCGSDGKTYPNKCHLTSTACTSQKDITVLHEGKC).

This sequence belongs to the conopeptide P-like superfamily. In terms of tissue distribution, expressed by the venom duct.

It is found in the secreted. Functionally, acts as a neurotoxin by inhibiting an ion channel. May also act as a serine protease inhibitor, since it possess the kazal serine protease inhibitor signature. The sequence is that of Turripeptide OL11-like from Lophiotoma albina (Sea snail).